Consider the following 207-residue polypeptide: Protein lin-7 homolog B (207 aa).

Positions 1–13 (MAALVEPLGLERD) match the Kinase interacting site motif. In terms of domain architecture, L27 spans 10-65 (LERDVSRAVELLERLQRSGELPPQKLQALQRVLQSRFCSAIREVYEQLYDTLDITG). A PDZ domain is found at 93–175 (VVELPKTDEG…SVKLVVRYTP (83 aa)). The disordered stretch occupies residues 187 to 207 (KMRSARRRQQHHSYTSLESRG). Positions 198–207 (HSYTSLESRG) are enriched in polar residues.

The protein belongs to the lin-7 family. In terms of assembly, forms a complex with CASK and CASKIN1. Component of the brain-specific heterotrimeric complex (LIN-10-LIN-2-LIN-7 complex) composed of at least APBA1, CASK, and LIN7, which associates with the motor protein KIF17 to transport vesicles along microtubules. Forms a heterotrimeric complex composed of MMP5, LIN7B and PATJ; the N-terminal L27 domain of PALS1 interacts with the L27 domain of PATJ and the C-terminal L27 domain of PALS1 interacts with the L27 domain of LIN7B. Forms a heterotrimeric complex with DLG1 and CASK via their L27 domains. Interacts with DLG4 and GRIN2B as well as CDH1 and CTNNB1, the channels KCNJ12/Kir2.2, KCNJ4/Kir2.3 and probably KCNJ2/Kir2.1 and SLC6A12/BGT-1 via its PDZ domain. The association of LIN7A with cadherin and beta-catenin is calcium-dependent, occurs at synaptic junctions and requires the actin cytoskeleton. Interacts with EGFR, ERBB2, ERBB3 and ERBB4 with both PDZ and KID domains. Associates with KIF17 via APBA1. Interacts with ASIC3. Interacts with TOPK. Interacts with RTKN. Interacts with APBA1. Interacts with MPP7. Interacts with DLG2. Interacts with DLG3. As to expression, expressed in the kidney; predominantly in the vasa recta.

Its subcellular location is the cell membrane. It is found in the basolateral cell membrane. The protein localises to the cell junction. The protein resides in the postsynaptic density membrane. It localises to the tight junction. Its function is as follows. Plays a role in establishing and maintaining the asymmetric distribution of channels and receptors at the plasma membrane of polarized cells. Forms membrane-associated multiprotein complexes that may regulate delivery and recycling of proteins to the correct membrane domains. The tripartite complex composed of LIN7 (LIN7A, LIN7B or LIN7C), CASK and APBA1 associates with the motor protein KIF17 to transport vesicles containing N-methyl-D-aspartate (NMDA) receptor subunit NR2B along microtubules. This complex may have the potential to couple synaptic vesicle exocytosis to cell adhesion in brain. Ensures the proper localization of GRIN2B (subunit 2B of the NMDA receptor) to neuronal postsynaptic density and may function in localizing synaptic vesicles at synapses where it is recruited by beta-catenin and cadherin. Required to localize Kir2 channels, GABA transporter (SLC6A12) and EGFR/ERBB1, ERBB2, ERBB3 and ERBB4 to the basolateral membrane of epithelial cells. May increase the amplitude of ASIC3 acid-evoked currents by stabilizing the channel at the cell surface. This is Protein lin-7 homolog B (Lin7b) from Mus musculus (Mouse).